The primary structure comprises 148 residues: Inner membrane protein YccF (148 aa).

Topologically, residues 1–14 are periplasmic; the sequence is MRTVLNILNFVLGG. Residues 15 to 37 traverse the membrane as a helical segment; that stretch reads FATTLGWLLATLVSIVLIFTLPL. Residues 38-76 are Cytoplasmic-facing; sequence TRSCWEITKLSLVPYGNEAIHVDELNPAGKNVLLNTGGT. Residues 77-99 form a helical membrane-spanning segment; that stretch reads VLNIFWLIFFGWWLCLMHIATGI. The Periplasmic portion of the chain corresponds to 100–102; sequence AQC. The helical transmembrane segment at 103–125 threads the bilayer; it reads ISIIGIPVGIANFKIAAIALWPV. Residues 126 to 148 lie on the Cytoplasmic side of the membrane; that stretch reads GRRVVSVETAQAAREANARRRFE.

It localises to the cell inner membrane. In Escherichia coli (strain K12), this protein is Inner membrane protein YccF (yccF).